Here is a 101-residue protein sequence, read N- to C-terminus: Small ribosomal subunit protein uS14 (101 aa).

It belongs to the universal ribosomal protein uS14 family. As to quaternary structure, part of the 30S ribosomal subunit. Contacts proteins S3 and S10.

In terms of biological role, binds 16S rRNA, required for the assembly of 30S particles and may also be responsible for determining the conformation of the 16S rRNA at the A site. This is Small ribosomal subunit protein uS14 from Haemophilus influenzae (strain 86-028NP).